Consider the following 304-residue polypeptide: Methionyl-tRNA formyltransferase (304 aa).

S110–P113 lines the (6S)-5,6,7,8-tetrahydrofolate pocket.

This sequence belongs to the Fmt family.

The enzyme catalyses L-methionyl-tRNA(fMet) + (6R)-10-formyltetrahydrofolate = N-formyl-L-methionyl-tRNA(fMet) + (6S)-5,6,7,8-tetrahydrofolate + H(+). Attaches a formyl group to the free amino group of methionyl-tRNA(fMet). The formyl group appears to play a dual role in the initiator identity of N-formylmethionyl-tRNA by promoting its recognition by IF2 and preventing the misappropriation of this tRNA by the elongation apparatus. The polypeptide is Methionyl-tRNA formyltransferase (Gluconobacter oxydans (strain 621H) (Gluconobacter suboxydans)).